The chain runs to 258 residues: Shikimate dehydrogenase (NADP(+)) (258 aa).

Shikimate-binding positions include 14 to 16 (SES) and T61. K65 serves as the catalytic Proton acceptor. Residues N86 and D101 each coordinate shikimate. NADP(+) contacts are provided by residues 125–129 (GSGGS) and L211. Y213 contributes to the shikimate binding site. G234 contacts NADP(+).

This sequence belongs to the shikimate dehydrogenase family. As to quaternary structure, homodimer.

It carries out the reaction shikimate + NADP(+) = 3-dehydroshikimate + NADPH + H(+). Its pathway is metabolic intermediate biosynthesis; chorismate biosynthesis; chorismate from D-erythrose 4-phosphate and phosphoenolpyruvate: step 4/7. Involved in the biosynthesis of the chorismate, which leads to the biosynthesis of aromatic amino acids. Catalyzes the reversible NADPH linked reduction of 3-dehydroshikimate (DHSA) to yield shikimate (SA). The sequence is that of Shikimate dehydrogenase (NADP(+)) from Clostridium botulinum (strain Loch Maree / Type A3).